An 86-amino-acid chain; its full sequence is Co-chaperonin GroES (86 aa).

This sequence belongs to the GroES chaperonin family. Heptamer of 7 subunits arranged in a ring. Interacts with the chaperonin GroEL.

It is found in the cytoplasm. Functionally, together with the chaperonin GroEL, plays an essential role in assisting protein folding. The GroEL-GroES system forms a nano-cage that allows encapsulation of the non-native substrate proteins and provides a physical environment optimized to promote and accelerate protein folding. GroES binds to the apical surface of the GroEL ring, thereby capping the opening of the GroEL channel. This chain is Co-chaperonin GroES, found in Campylobacter curvus (strain 525.92).